The following is a 284-amino-acid chain: Aspartate dehydrogenase domain-containing protein (284 aa).

This sequence belongs to the L-aspartate dehydrogenase family.

The protein is Aspartate dehydrogenase domain-containing protein (aspdh) of Xenopus tropicalis (Western clawed frog).